The chain runs to 520 residues: MEELQGYLEKDRSRQQHFLYPLLFQEYIYALAHNHGLNGSIFYEPVEVFGYDNKSSLVLVKRLITRIYQQNFLISLVNDSNQNRFVGYNHNNFFFSHFHSQMISESFAIIVEIPFSLRLVSYFEEKEIPKYHNLRSIHSIFPFLEDKLSHLNYVSDILIPHPIHMEILVQILQCWIQDVPFLHLLRFFLHEYHNLNSLLITQKKSIYVFSKENKRLFRFLYNSYVFEWEFLLVFIRKQSSYLRLISSGTFLERIHFYEKMEHLQMEHFVVVCRNYFHRTLWFCKDSFMHYVRYQGKAILASKGTHLLMKKWKYHFFNFWQYYFHVWSQPYRIHINQLSNYSFYFLGYLSSLLLNLSAVRNQMLENSFLIDTITKKFDTIVPVIFLIGSLAKAQFCTVSGHPISKPIWADLSDSDILDRFGRICRNISHYHSGSSKKQGLYRIKYILRLSCARTLARKHKSTVRTFLRRLGSGLLEEFFTEEEQVLSLIFPKTTPFILHRSHRERIWYLDIIRINDLVNHS.

The protein belongs to the intron maturase 2 family. MatK subfamily.

It is found in the plastid. The protein localises to the chloroplast. Usually encoded in the trnK tRNA gene intron. Probably assists in splicing its own and other chloroplast group II introns. In Maianthemum dilatatum (False lily-of-the-valley), this protein is Maturase K.